The following is a 218-amino-acid chain: Small ribosomal subunit protein uS5 (218 aa).

The S5 DRBM domain occupies 55–118 (LDHEVIDVSI…RNAKLNIIPV (64 aa)).

Belongs to the universal ribosomal protein uS5 family. In terms of assembly, part of the 30S ribosomal subunit. Contacts protein S4.

Its function is as follows. With S4 and S12 plays an important role in translational accuracy. This chain is Small ribosomal subunit protein uS5, found in Aeropyrum pernix (strain ATCC 700893 / DSM 11879 / JCM 9820 / NBRC 100138 / K1).